The sequence spans 405 residues: Cytoplasmic tRNA 2-thiolation protein 2 (405 aa).

Belongs to the CTU2/NCS2 family.

The protein resides in the cytoplasm. It participates in tRNA modification; 5-methoxycarbonylmethyl-2-thiouridine-tRNA biosynthesis. Functionally, plays a central role in 2-thiolation of mcm(5)S(2)U at tRNA wobble positions of tRNA(Lys), tRNA(Glu) and tRNA(Gln). May act by forming a heterodimer with NCS6/CTU1 that ligates sulfur from thiocarboxylated URM1 onto the uridine of tRNAs at wobble position. This is Cytoplasmic tRNA 2-thiolation protein 2 from Drosophila pseudoobscura pseudoobscura (Fruit fly).